Here is a 159-residue protein sequence, read N- to C-terminus: MAQKGSERTIRKVVAENRKARFNYEIVDTYEAGLVLTGTEVKSLREGKANISESYATDEGGEIWLINSYLPEYLQANRFNHETRRRRKLLLSKREVNRLQGAVNREGMSLIPLKIYFNDRGRAKLELALGKGKKLHDKRETSKERDWNRQKNRLLKERG.

The tract at residues 134–159 is disordered; the sequence is KLHDKRETSKERDWNRQKNRLLKERG. Residues 137-159 are compositionally biased toward basic and acidic residues; that stretch reads DKRETSKERDWNRQKNRLLKERG.

It belongs to the SmpB family.

It localises to the cytoplasm. Its function is as follows. Required for rescue of stalled ribosomes mediated by trans-translation. Binds to transfer-messenger RNA (tmRNA), required for stable association of tmRNA with ribosomes. tmRNA and SmpB together mimic tRNA shape, replacing the anticodon stem-loop with SmpB. tmRNA is encoded by the ssrA gene; the 2 termini fold to resemble tRNA(Ala) and it encodes a 'tag peptide', a short internal open reading frame. During trans-translation Ala-aminoacylated tmRNA acts like a tRNA, entering the A-site of stalled ribosomes, displacing the stalled mRNA. The ribosome then switches to translate the ORF on the tmRNA; the nascent peptide is terminated with the 'tag peptide' encoded by the tmRNA and targeted for degradation. The ribosome is freed to recommence translation, which seems to be the essential function of trans-translation. The chain is SsrA-binding protein from Sinorhizobium fredii (strain NBRC 101917 / NGR234).